Here is a 424-residue protein sequence, read N- to C-terminus: Enolase (424 aa).

Gln-162 provides a ligand contact to (2R)-2-phosphoglycerate. The Proton donor role is filled by Glu-204. Mg(2+)-binding residues include Asp-241, Glu-284, and Asp-311. Residues Lys-336, Arg-365, Ser-366, and Lys-387 each coordinate (2R)-2-phosphoglycerate. Catalysis depends on Lys-336, which acts as the Proton acceptor.

This sequence belongs to the enolase family. The cofactor is Mg(2+).

The protein localises to the cytoplasm. It localises to the secreted. It is found in the cell surface. The catalysed reaction is (2R)-2-phosphoglycerate = phosphoenolpyruvate + H2O. The protein operates within carbohydrate degradation; glycolysis; pyruvate from D-glyceraldehyde 3-phosphate: step 4/5. In terms of biological role, catalyzes the reversible conversion of 2-phosphoglycerate (2-PG) into phosphoenolpyruvate (PEP). It is essential for the degradation of carbohydrates via glycolysis. The sequence is that of Enolase from Parvibaculum lavamentivorans (strain DS-1 / DSM 13023 / NCIMB 13966).